Consider the following 159-residue polypeptide: bZIP transcription factor 11 (159 aa).

The segment covering 1 to 21 (MESSSSGTTSSTIQTSSGSEE) has biased composition (low complexity). Residues 1-47 (MESSSSGTTSSTIQTSSGSEESLMEQRKRKRMLSNRESARRSRMKKQ) are disordered. The 64-residue stretch at 25 to 88 (EQRKRKRMLS…LTVEAENSVL (64 aa)) folds into the bZIP domain. Positions 27–48 (RKRKRMLSNRESARRSRMKKQK) are basic motif. The leucine-zipper stretch occupies residues 53–67 (LTAQVNHLKKENTEI).

Forms heterodimers with BZIP1, BZIP9, BZIP10, BZIP25 and BZIP63. Interacts with ADA2B. In terms of tissue distribution, highly expressed in stems and flowers. Expressed in root tips, cotyledons, leaf vasculature, embryos, apical parts of siliques and funiculi.

Its subcellular location is the nucleus. In terms of biological role, transcription factor that binds to the DNA sequence 5'-ACTCAT-3' in target gene promoters. Promotes POX1/PRODH1 expression in response to hypoosmolarity stress. Positively regulates the expression of ASN1 and POX2/PRODH2 genes, which are involved in amino acid metabolism. Regulates several metabolic pathways such as myo-inositol, raffinose and trehalose. Regulates several trehalose metabolism genes, including TRE1, TPP5 and TPP6. Mediates recruitment of the histone acetylation machinery to activate auxin-induced transcription. Interacts with ADA2B adapter protein to promote ADA2B-mediated recruitment of SAGA-like histone acetyltransferase complexes to specific auxin-responsive genes. This Arabidopsis thaliana (Mouse-ear cress) protein is bZIP transcription factor 11.